A 606-amino-acid polypeptide reads, in one-letter code: Kelch-like protein 41 (606 aa).

Ser-3 carries the post-translational modification Phosphoserine. The BTB domain occupies 33 to 100 (IDCTLKAGDK…LYSASIDLND (68 aa)). The 103-residue stretch at 135–237 (CLAILRLGLL…TEKYFKDHVE (103 aa)) folds into the BACK domain. Kelch repeat units lie at residues 346–398 (QIYV…EVDD), 399–447 (KIYV…SHKG), 448–495 (MIYC…VHKG), 497–542 (IVIA…SLAG), and 544–599 (LYAI…TRLN).

In terms of assembly, interacts with NRAP. Interacts with LASP1. Part of a complex that contains CUL3, RBX1 and KLHL41. Ubiquitinated by E3 ubiquitin ligase complex formed by CUL3 and RBX1 and probably targeted for proteasome-independent degradation. Quinone-induced oxidative stress increases its ubiquitination. Sarcomeric muscle.

The protein resides in the cytoplasm. Its subcellular location is the cytoskeleton. It localises to the cell projection. It is found in the pseudopodium. The protein localises to the ruffle. The protein resides in the myofibril. Its subcellular location is the sarcomere. It localises to the m line. It is found in the sarcoplasmic reticulum membrane. The protein localises to the endoplasmic reticulum membrane. Functionally, involved in skeletal muscle development and differentiation. Regulates proliferation and differentiation of myoblasts and plays a role in myofibril assembly by promoting lateral fusion of adjacent thin fibrils into mature, wide myofibrils. Required for pseudopod elongation in transformed cells. This chain is Kelch-like protein 41 (KLHL41), found in Homo sapiens (Human).